Reading from the N-terminus, the 304-residue chain is Acetylglutamate kinase (304 aa).

Substrate-binding positions include 82 to 83 (GG), arginine 104, and asparagine 197.

This sequence belongs to the acetylglutamate kinase family. ArgB subfamily.

It is found in the cytoplasm. The catalysed reaction is N-acetyl-L-glutamate + ATP = N-acetyl-L-glutamyl 5-phosphate + ADP. It participates in amino-acid biosynthesis; L-arginine biosynthesis; N(2)-acetyl-L-ornithine from L-glutamate: step 2/4. Its function is as follows. Catalyzes the ATP-dependent phosphorylation of N-acetyl-L-glutamate. This is Acetylglutamate kinase from Prochlorococcus marinus (strain NATL1A).